Consider the following 511-residue polypeptide: DEP domain-containing protein 7 (511 aa).

A DEP domain is found at Leu46–Thr136.

It belongs to the DEPDC7 family.

The sequence is that of DEP domain-containing protein 7 (DEPDC7) from Pongo abelii (Sumatran orangutan).